A 325-amino-acid polypeptide reads, in one-letter code: MSWISPELIEILLTILKAVVILLVVVTCGAFMSFGERRLLGLFQNRYGPNRVGWGGSLQLVADMIKMFFKEDWIPKFSDRVIFTLAPMIAFTSLLLAFAIVPVSPGWVVADLNIGILFFLMMAGLAVYAVLFAGWSSNNKYSLLGAMRASAQTLSYEVFLGLSLMGVVAQAGSFNMTDIVNSQAHVWNVIPQFFGFITFAIAGVAVCHRHPFDQPEAEQELADGYHIEYSGMKFGLFFVGEYIGIVTISALMVTLFFGGWQGPLLPPFIWFALKTAFFMMMFILIRASLPRPRYDRVMSFGWKICLPLTLINLLVTAAVILWQAQ.

8 helical membrane passes run 11–31 (ILLT…CGAF), 81–101 (VIFT…FAIV), 114–134 (IGIL…LFAG), 154–174 (LSYE…AGSF), 186–206 (VWNV…GVAV), 237–257 (FFVG…TLFF), 265–285 (LPPF…FILI), and 304–324 (ICLP…LWQA).

This sequence belongs to the complex I subunit 1 family. NDH-1 is composed of 13 different subunits. Subunits NuoA, H, J, K, L, M, N constitute the membrane sector of the complex.

It localises to the cell inner membrane. It catalyses the reaction a quinone + NADH + 5 H(+)(in) = a quinol + NAD(+) + 4 H(+)(out). Functionally, NDH-1 shuttles electrons from NADH, via FMN and iron-sulfur (Fe-S) centers, to quinones in the respiratory chain. The immediate electron acceptor for the enzyme in this species is believed to be ubiquinone. Couples the redox reaction to proton translocation (for every two electrons transferred, four hydrogen ions are translocated across the cytoplasmic membrane), and thus conserves the redox energy in a proton gradient. This subunit may bind ubiquinone. This Shigella flexneri serotype 5b (strain 8401) protein is NADH-quinone oxidoreductase subunit H.